Consider the following 391-residue polypeptide: Transaldolase (391 aa).

The transaldolase stretch occupies residues 1–329 (MGKNLLEQLR…RLKVLDGQEH (329 aa)). The Schiff-base intermediate with substrate role is filled by Lys-136. 2 EF-hand domains span residues 329 to 364 (HIKH…FDAL) and 365 to 387 (DRDH…AFRL). Ca(2+) is bound by residues Asp-342, Asp-344, Asp-346, Glu-353, Asp-365, Asp-367, Asp-369, Lys-371, and Glu-376.

The protein belongs to the transaldolase family. Type 1 subfamily.

The protein localises to the cytoplasm. The enzyme catalyses D-sedoheptulose 7-phosphate + D-glyceraldehyde 3-phosphate = D-erythrose 4-phosphate + beta-D-fructose 6-phosphate. Its pathway is carbohydrate degradation; pentose phosphate pathway; D-glyceraldehyde 3-phosphate and beta-D-fructose 6-phosphate from D-ribose 5-phosphate and D-xylulose 5-phosphate (non-oxidative stage): step 2/3. Its function is as follows. Transaldolase is important for the balance of metabolites in the pentose-phosphate pathway. In Synechocystis sp. (strain ATCC 27184 / PCC 6803 / Kazusa), this protein is Transaldolase.